Consider the following 321-residue polypeptide: Olfactory receptor 52N2 (321 aa).

Over 1-27 (MSGDNSSSLTPGFFILNGVPGLEATHI) the chain is Extracellular. N5 is a glycosylation site (N-linked (GlcNAc...) asparagine). A helical transmembrane segment spans residues 28-48 (WISLPFCFMYIIAVVGNCGLI). At 49 to 56 (CLISHEEA) the chain is on the cytoplasmic side. Residues 57 to 77 (LHRPMYYFLALLSFTDVTLCT) traverse the membrane as a helical segment. Over 78–101 (TMVPNMLCIFWFNLKEIDFNACLA) the chain is Extracellular. C99 and C191 are oxidised to a cystine. Residues 102-122 (QMFFVHMLTGMESGVLMLMAL) form a helical membrane-spanning segment. Residues 123 to 141 (DRYVAICYPLRYATILTNP) lie on the Cytoplasmic side of the membrane. A helical transmembrane segment spans residues 142–162 (VIAKAGLATFLRNVMLIIPFT). Residues 163 to 198 (LLTKRLPYCRGNFIPHTYCDHMSVAKVSCGNFKVNA) are Extracellular-facing. The chain crosses the membrane as a helical span at residues 199-219 (IYGLMVALLIGVFDICCISVS). Over 220 to 239 (YTMILQAVMSLSSADARHKA) the chain is Cytoplasmic. Residues 240–260 (FSTCTSHMCSIVITYVAAFFT) traverse the membrane as a helical segment. The Extracellular segment spans residues 261 to 276 (FFTHRFVGHNIPNHIH). A helical membrane pass occupies residues 277-297 (IIVANLYLLLPPTMNPIVYGV). Residues 298-321 (KTKQIQEGVIKFLLGDKVSFTYDK) are Cytoplasmic-facing.

This sequence belongs to the G-protein coupled receptor 1 family.

Its subcellular location is the cell membrane. In terms of biological role, odorant receptor. The polypeptide is Olfactory receptor 52N2 (OR52N2) (Homo sapiens (Human)).